Reading from the N-terminus, the 688-residue chain is Glycine--tRNA ligase beta subunit (688 aa).

This sequence belongs to the class-II aminoacyl-tRNA synthetase family. Tetramer of two alpha and two beta subunits.

Its subcellular location is the cytoplasm. The enzyme catalyses tRNA(Gly) + glycine + ATP = glycyl-tRNA(Gly) + AMP + diphosphate. The polypeptide is Glycine--tRNA ligase beta subunit (Syntrophomonas wolfei subsp. wolfei (strain DSM 2245B / Goettingen)).